The primary structure comprises 1159 residues: MYLSICCCFLLWAPALTLKNLNYSVPEEQGAGTVIGNIGRDARLQPGLPPAERGGGGRSKSGSYRVLENSAPHLLDVDADSGLLYTKQRIDRESLCRHNAKCQLSLEVFANDKEICMIKVEIQDINDNAPSFSSDQIEMDISENAAPGTRFPLTSAHDPDAGENGLRTYLLTRDDHGLFGLDVKSRGDGTKFPELVIQKALDREQQNHHTLVLTALDGGEPPRSATVQINVKVIDSNDNSPVFEAPSYLVELPENAPLGTVVIDLNATDADEGPNGEVLYSFSSYVPDRVRELFSIDPKTGLIRVKGNLDYEENGMLEIDVQARDLGPNPIPAHCKVTVKLIDRNDNAPSIGFVSVRQGALSEAAPPGTVIALVRVTDRDSGKNGQLQCRVLGGGGTGGGGGLGGPGGSVPFKLEENYDNFYTVVTDRPLDRETQDEYNVTIVARDGGSPPLNSTKSFAIKILDENDNPPRFTKGLYVLQVHENNIPGEYLGSVLAQDPDLGQNGTVSYSILPSHIGDVSIYTYVSVNPTNGAIYALRSFNFEQTKAFEFKVLAKDSGAPAHLESNATVRVTVLDVNDNAPVIVLPTLQNDTAELQVPRNAGLGYLVSTVRALDSDFGESGRLTYEIVDGNDDHLFEIDPSSGEIRTLHPFWEDVTPVVELVVKVTDHGKPTLSAVAKLIIRSVSGSLPEGVPRVNGEQHHWDMSLPLIVTLSTISIILLAAMITIAVKCKRENKEIRTYNCRIAEYSHPQLGGGKGKKKKINKNDIMLVQSEVEERNAMNVMNVVSSPSLATSPMYFDYQTRLPLSSPRSEVMYLKPASNNLTVPQGHAGCHTSFTGQGTNASETPATRMSIIQTDNFPAEPNYMGSRQQFVQSSSTFKDPERASLRDSGHGDSDQADSDQDTNKGSCCDMSVREALKMKTTSTKSQPLEQEPEECVNCTDECRVLGHSDRCWMPQFPAANQAENADYRTNLFVPTVEANVETETYETVNPTGKKTFCTFGKDKREHTILIANVKPYLKAKRALSPLLQEVPSASSSPTKACIEPCTSTKGSLDGCEAKPGALAEASSQYLPTDSQYLSPSKQPRDPPFMASDQMARVFADVHSRASRDSSEMGAVLEQLDHPNRDLGRESVDAEEVVREIDKLLQDCRGNDPVAVRK.

The first 17 residues, methionine 1–threonine 17, serve as a signal peptide directing secretion. 6 consecutive Cadherin domains span residues leucine 18 to phenylalanine 132, serine 133 to phenylalanine 243, glutamate 244 to isoleucine 351, phenylalanine 353 to phenylalanine 472, threonine 473 to isoleucine 583, and glutamine 589 to valine 695. Over leucine 18–proline 707 the chain is Extracellular. N-linked (GlcNAc...) asparagine glycosylation is present at asparagine 22. Positions arginine 186–aspartate 188 match the Cell attachment site motif. Asparagine 266, asparagine 439, asparagine 453, asparagine 504, asparagine 566, and asparagine 590 each carry an N-linked (GlcNAc...) asparagine glycan. The chain crosses the membrane as a helical span at residues leucine 708–valine 728. Topologically, residues lysine 729–lysine 1159 are cytoplasmic. Disordered regions lie at residues asparagine 858–cysteine 909 and serine 1108–serine 1132. The segment covering glycine 867–phenylalanine 879 has biased composition (polar residues). Basic and acidic residues-rich tracts occupy residues lysine 880–serine 895 and glutamine 1120–serine 1132.

The protein resides in the cell membrane. Its function is as follows. Potential calcium-dependent cell-adhesion protein. The chain is Protocadherin-17 (PCDH17) from Homo sapiens (Human).